The primary structure comprises 376 residues: D-alanine--D-alanine ligase (376 aa).

Residues 153–366 (KLLLAGQGLP…YPELVHRLIQ (214 aa)) form the ATP-grasp domain. 185–240 (VEALGYPVFVKPARAGSSIGITRVTSREGLAAAVAEAVSHDPKVVVEAALVGREIE) contributes to the ATP binding site. Residues Asp317, Glu333, and Asn335 each coordinate Mg(2+).

The protein belongs to the D-alanine--D-alanine ligase family. Mg(2+) is required as a cofactor. Requires Mn(2+) as cofactor.

The protein resides in the cytoplasm. It catalyses the reaction 2 D-alanine + ATP = D-alanyl-D-alanine + ADP + phosphate + H(+). Its pathway is cell wall biogenesis; peptidoglycan biosynthesis. Functionally, cell wall formation. The chain is D-alanine--D-alanine ligase from Kineococcus radiotolerans (strain ATCC BAA-149 / DSM 14245 / SRS30216).